A 193-amino-acid polypeptide reads, in one-letter code: Probable gluconokinase (193 aa).

Residue 18 to 25 (GTAGTGKS) participates in ATP binding.

Belongs to the gluconokinase GntK/GntV family.

The protein localises to the cytoplasm. It carries out the reaction D-gluconate + ATP = 6-phospho-D-gluconate + ADP + H(+). Its pathway is carbohydrate acid metabolism; D-gluconate degradation. This chain is Probable gluconokinase, found in Saccharomyces cerevisiae (strain ATCC 204508 / S288c) (Baker's yeast).